The following is a 629-amino-acid chain: Translation initiation factor IF-2 (629 aa).

The interval 1 to 20 (MAKNIKTNKKPQQVNKKEMS) is disordered. The region spanning 127 to 297 (HRAPIVTIMG…LLIAEMQDYK (171 aa)) is the tr-type G domain. Residues 136-143 (GHVDHGKT) form a G1 region. GTP is bound at residue 136–143 (GHVDHGKT). Positions 161–165 (GITQA) are G2. Residues 183 to 186 (DTPG) form a G3 region. GTP contacts are provided by residues 183–187 (DTPGH) and 237–240 (NKCD). Residues 237–240 (NKCD) are G4. The segment at 273–275 (SAK) is G5.

Belongs to the TRAFAC class translation factor GTPase superfamily. Classic translation factor GTPase family. IF-2 subfamily.

It localises to the cytoplasm. Functionally, one of the essential components for the initiation of protein synthesis. Protects formylmethionyl-tRNA from spontaneous hydrolysis and promotes its binding to the 30S ribosomal subunits. Also involved in the hydrolysis of GTP during the formation of the 70S ribosomal complex. This is Translation initiation factor IF-2 from Mesoplasma florum (strain ATCC 33453 / NBRC 100688 / NCTC 11704 / L1) (Acholeplasma florum).